Consider the following 266-residue polypeptide: 3-methyl-2-oxobutanoate hydroxymethyltransferase (266 aa).

Mg(2+)-binding residues include Asp-45 and Asp-84. Residues 45 to 46 (DS), Asp-84, and Lys-113 each bind 3-methyl-2-oxobutanoate. Glu-115 contributes to the Mg(2+) binding site. Glu-183 acts as the Proton acceptor in catalysis.

This sequence belongs to the PanB family. In terms of assembly, homodecamer; pentamer of dimers. The cofactor is Mg(2+).

It localises to the cytoplasm. It carries out the reaction 3-methyl-2-oxobutanoate + (6R)-5,10-methylene-5,6,7,8-tetrahydrofolate + H2O = 2-dehydropantoate + (6S)-5,6,7,8-tetrahydrofolate. The protein operates within cofactor biosynthesis; (R)-pantothenate biosynthesis; (R)-pantoate from 3-methyl-2-oxobutanoate: step 1/2. Its function is as follows. Catalyzes the reversible reaction in which hydroxymethyl group from 5,10-methylenetetrahydrofolate is transferred onto alpha-ketoisovalerate to form ketopantoate. The protein is 3-methyl-2-oxobutanoate hydroxymethyltransferase of Coxiella burnetii (strain CbuK_Q154) (Coxiella burnetii (strain Q154)).